A 206-amino-acid polypeptide reads, in one-letter code: Pyrrolidone-carboxylate peptidase (206 aa).

Catalysis depends on residues Glu78, Cys141, and His165.

This sequence belongs to the peptidase C15 family. Homotetramer.

Its subcellular location is the cytoplasm. It carries out the reaction Release of an N-terminal pyroglutamyl group from a polypeptide, the second amino acid generally not being Pro.. Removes 5-oxoproline from various penultimate amino acid residues except L-proline. The protein is Pyrrolidone-carboxylate peptidase of Thermococcus kodakarensis (strain ATCC BAA-918 / JCM 12380 / KOD1) (Pyrococcus kodakaraensis (strain KOD1)).